The primary structure comprises 118 residues: Na(+)/H(+) antiporter subunit G1 (118 aa).

Transmembrane regions (helical) follow at residues 9-29 (VSII…TGLI), 47-67 (LGAM…EGYV), and 69-89 (MQLI…SHLI).

The protein belongs to the CPA3 antiporters (TC 2.A.63) subunit G family. As to quaternary structure, may form a heterooligomeric complex that consists of seven subunits: mnhA1, mnhB1, mnhC1, mnhD1, mnhE1, mnhF1 and mnhG1.

Its subcellular location is the cell membrane. Its function is as follows. Mnh complex is a Na(+)/H(+) antiporter involved in Na(+) excretion. This is Na(+)/H(+) antiporter subunit G1 (mnhG1) from Staphylococcus epidermidis (strain ATCC 35984 / DSM 28319 / BCRC 17069 / CCUG 31568 / BM 3577 / RP62A).